Reading from the N-terminus, the 941-residue chain is Glycine dehydrogenase (decarboxylating) (941 aa).

Residue Lys692 is modified to N6-(pyridoxal phosphate)lysine.

The protein belongs to the GcvP family. The glycine cleavage system is composed of four proteins: P, T, L and H. The cofactor is pyridoxal 5'-phosphate.

The catalysed reaction is N(6)-[(R)-lipoyl]-L-lysyl-[glycine-cleavage complex H protein] + glycine + H(+) = N(6)-[(R)-S(8)-aminomethyldihydrolipoyl]-L-lysyl-[glycine-cleavage complex H protein] + CO2. Its function is as follows. The glycine cleavage system catalyzes the degradation of glycine. The P protein binds the alpha-amino group of glycine through its pyridoxal phosphate cofactor; CO(2) is released and the remaining methylamine moiety is then transferred to the lipoamide cofactor of the H protein. The sequence is that of Glycine dehydrogenase (decarboxylating) from Mycolicibacterium paratuberculosis (strain ATCC BAA-968 / K-10) (Mycobacterium paratuberculosis).